The chain runs to 355 residues: Uroporphyrinogen decarboxylase (355 aa).

Residues 27–31 (RQAGR), Asp-78, Tyr-155, Thr-210, and His-328 each bind substrate.

Belongs to the uroporphyrinogen decarboxylase family. Homodimer.

It localises to the cytoplasm. The catalysed reaction is uroporphyrinogen III + 4 H(+) = coproporphyrinogen III + 4 CO2. The protein operates within porphyrin-containing compound metabolism; protoporphyrin-IX biosynthesis; coproporphyrinogen-III from 5-aminolevulinate: step 4/4. Its function is as follows. Catalyzes the decarboxylation of four acetate groups of uroporphyrinogen-III to yield coproporphyrinogen-III. In Pseudomonas fluorescens (strain Pf0-1), this protein is Uroporphyrinogen decarboxylase.